The sequence spans 480 residues: tRNA-2-methylthio-N(6)-dimethylallyladenosine synthase (480 aa).

An MTTase N-terminal domain is found at 25 to 145; it reads GVFYVHTLGC…LPQLLDQARI (121 aa). [4Fe-4S] cluster contacts are provided by cysteine 34, cysteine 74, cysteine 108, cysteine 182, cysteine 186, and cysteine 189. The Radical SAM core domain occupies 168–397; that stretch reads RASKVSSWVA…VALQERITEE (230 aa). The 71-residue stretch at 400–470 folds into the TRAM domain; the sequence is KTFEGRDVEV…RHNLIADPNP (71 aa).

It belongs to the methylthiotransferase family. MiaB subfamily. As to quaternary structure, monomer. [4Fe-4S] cluster serves as cofactor.

It is found in the cytoplasm. It carries out the reaction N(6)-dimethylallyladenosine(37) in tRNA + (sulfur carrier)-SH + AH2 + 2 S-adenosyl-L-methionine = 2-methylsulfanyl-N(6)-dimethylallyladenosine(37) in tRNA + (sulfur carrier)-H + 5'-deoxyadenosine + L-methionine + A + S-adenosyl-L-homocysteine + 2 H(+). Catalyzes the methylthiolation of N6-(dimethylallyl)adenosine (i(6)A), leading to the formation of 2-methylthio-N6-(dimethylallyl)adenosine (ms(2)i(6)A) at position 37 in tRNAs that read codons beginning with uridine. The sequence is that of tRNA-2-methylthio-N(6)-dimethylallyladenosine synthase from Bifidobacterium adolescentis (strain ATCC 15703 / DSM 20083 / NCTC 11814 / E194a).